Here is a 1133-residue protein sequence, read N- to C-terminus: Error-prone DNA polymerase (1133 aa).

Belongs to the DNA polymerase type-C family. DnaE2 subfamily.

The protein localises to the cytoplasm. It carries out the reaction DNA(n) + a 2'-deoxyribonucleoside 5'-triphosphate = DNA(n+1) + diphosphate. Functionally, DNA polymerase involved in damage-induced mutagenesis and translesion synthesis (TLS). It is not the major replicative DNA polymerase. The chain is Error-prone DNA polymerase from Anaeromyxobacter sp. (strain K).